The sequence spans 149 residues: Large ribosomal subunit protein bL9 (149 aa).

The protein belongs to the bacterial ribosomal protein bL9 family.

Its function is as follows. Binds to the 23S rRNA. In Sulfurihydrogenibium sp. (strain YO3AOP1), this protein is Large ribosomal subunit protein bL9.